Here is a 224-residue protein sequence, read N- to C-terminus: Transcriptional regulatory protein TctD (224 aa).

In terms of domain architecture, Response regulatory spans 2-116 (RLLLAEDNRE…ELDARLRALL (115 aa)). The residue at position 51 (D51) is a 4-aspartylphosphate. The ompR/PhoB-type DNA-binding region spans 121 to 219 (GQVHEVQQLG…LRGLGYVLER (99 aa)).

Functionally, transcriptional activator of the tctI tricarboxylate transport system operon. This is Transcriptional regulatory protein TctD (tctD) from Salmonella typhimurium (strain SL1344).